Here is a 102-residue protein sequence, read N- to C-terminus: A-type ATP synthase subunit F (102 aa).

It belongs to the V-ATPase F subunit family. As to quaternary structure, has multiple subunits with at least A(3), B(3), C, D, E, F, H, I and proteolipid K(x).

The protein localises to the cell membrane. Component of the A-type ATP synthase that produces ATP from ADP in the presence of a proton gradient across the membrane. This Thermococcus sibiricus (strain DSM 12597 / MM 739) protein is A-type ATP synthase subunit F.